We begin with the raw amino-acid sequence, 148 residues long: Lysozyme C (148 aa).

The signal sequence occupies residues 1–18; it reads MKVLIILGLVLLSVMVQG. The 130-residue stretch at 19 to 148 folds into the C-type lysozyme domain; that stretch reads KVFERCELAR…VSQYVQGCGV (130 aa). 4 disulfide bridges follow: Cys24/Cys146, Cys48/Cys134, Cys83/Cys99, and Cys95/Cys113. Catalysis depends on residues Glu53 and Asp71.

Belongs to the glycosyl hydrolase 22 family. As to quaternary structure, monomer.

The catalysed reaction is Hydrolysis of (1-&gt;4)-beta-linkages between N-acetylmuramic acid and N-acetyl-D-glucosamine residues in a peptidoglycan and between N-acetyl-D-glucosamine residues in chitodextrins.. Its function is as follows. Lysozymes have primarily a bacteriolytic function; those in tissues and body fluids are associated with the monocyte-macrophage system and enhance the activity of immunoagents. The chain is Lysozyme C (LYZ) from Callithrix jacchus (White-tufted-ear marmoset).